Reading from the N-terminus, the 616-residue chain is Chaperone protein DnaK (616 aa).

Thr174 bears the Phosphothreonine; by autocatalysis mark. A disordered region spans residues 576–616 (QASAPGAGPEGASGGFGGENKKDDNVVDADYTVIDDDKKKT). The segment covering 583-593 (GPEGASGGFGG) has biased composition (gly residues).

It belongs to the heat shock protein 70 family.

Its function is as follows. Acts as a chaperone. The sequence is that of Chaperone protein DnaK from Heliobacterium modesticaldum (strain ATCC 51547 / Ice1).